The chain runs to 347 residues: Quinolinate synthase (347 aa).

Positions 47 and 68 each coordinate iminosuccinate. Residue cysteine 113 coordinates [4Fe-4S] cluster. Iminosuccinate contacts are provided by residues 139–141 (YAN) and serine 156. A [4Fe-4S] cluster-binding site is contributed by cysteine 200. Residues 226 to 228 (HPE) and threonine 243 each bind iminosuccinate. Cysteine 297 contributes to the [4Fe-4S] cluster binding site.

Belongs to the quinolinate synthase family. Type 1 subfamily. It depends on [4Fe-4S] cluster as a cofactor.

It localises to the cytoplasm. The catalysed reaction is iminosuccinate + dihydroxyacetone phosphate = quinolinate + phosphate + 2 H2O + H(+). It functions in the pathway cofactor biosynthesis; NAD(+) biosynthesis; quinolinate from iminoaspartate: step 1/1. Its function is as follows. Catalyzes the condensation of iminoaspartate with dihydroxyacetone phosphate to form quinolinate. The protein is Quinolinate synthase of Enterobacter sp. (strain 638).